Reading from the N-terminus, the 686-residue chain is Pentatricopeptide repeat-containing protein At4g08210 (686 aa).

PPR repeat units follow at residues 4-38, 39-69, 70-104, 106-140, 141-171, 172-206, 207-236, 237-271, 272-302, 306-340, 341-375, 376-406, 407-441, 442-476, 477-507, 508-542, 543-573, and 579-609; these read DLKL…GISQ, NVFI…MSER, NIVT…EEEA, NEFM…NLRG, DVVL…ILRP, SSTS…NVVS, WNCL…GLVL, DGFA…GLES, SPFA…EKLA, SVAV…DLCF, DSYT…GYEL, DYIV…LPNK, DIIA…GLDA, DQFI…GYES, EPVT…MLER, DVVS…GIEP, NKVT…MKSE, and YLEH…MPLE. The segment at 614–686 is type E motif; degenerate; sequence IWTSLLTACG…AKESGMSWII (73 aa).

Belongs to the PPR family. PCMP-E subfamily.

This is Pentatricopeptide repeat-containing protein At4g08210 (PCMP-E100) from Arabidopsis thaliana (Mouse-ear cress).